The primary structure comprises 491 residues: Neuronal acetylcholine receptor subunit beta-2 (491 aa).

Residues 1 to 18 form the signal peptide; it reads MALLRVLCLLAALRRSLC. Residues 19 to 226 are Extracellular-facing; the sequence is TDTEERLVEY…ITYDFIIRRK (208 aa). Residues Asn44 and Asn161 are each glycosylated (N-linked (GlcNAc...) asparagine). The cysteines at positions 148 and 162 are disulfide-linked. A helical membrane pass occupies residues 227-251; the sequence is PLFYTINLIIPCILITSLAILVFYL. The Cytoplasmic portion of the chain corresponds to 252 to 258; the sequence is PSDCGEK. Residues 259–277 traverse the membrane as a helical segment; that stretch reads MTLCISVLLALTVFLLLIS. The Extracellular segment spans residues 278–292; it reads KIVPPTSLDVPLVGK. Residues 293 to 314 traverse the membrane as a helical segment; the sequence is YLMFTMVLVTFSIVTSVCVLNV. Over 315–449 the chain is Cytoplasmic; it reads HHRSPTTHTM…WKYVAMVIDR (135 aa). A helical membrane pass occupies residues 450 to 468; that stretch reads LFLWIFVFVCVFGTVGMFL.

The protein belongs to the ligand-gated ion channel (TC 1.A.9) family. Acetylcholine receptor (TC 1.A.9.1) subfamily. Beta-2/CHRNB2 sub-subfamily. In terms of assembly, neuronal AChR is a heteropentamer composed of two different types of subunits: alpha and beta. CHRNB2/Beta-2 subunit can be combined to CHRNA2/alpha-2, CHRNA3/alpha-3 or CHRNA4/alpha-4, CHRNA5/alpha-5, CHRNA6/alpha-6 and CHRNB3/beta-3 to give rise to functional receptors.

Its subcellular location is the synaptic cell membrane. It localises to the cell membrane. It carries out the reaction Ca(2+)(in) = Ca(2+)(out). The enzyme catalyses K(+)(in) = K(+)(out). It catalyses the reaction Na(+)(in) = Na(+)(out). Activated by a myriad of ligands such as acetylcholine, cytisine, nicotine, choline and epibatidine. nAChR activity is inhibited by the antagonist alpha-conotoxins BuIA, PnIA, PnIC, GID and MII, small disulfide-constrained peptides from cone snails. In terms of biological role, component of neuronal acetylcholine receptors (nAChRs) that function as pentameric, ligand-gated cation channels with high calcium permeability among other activities. nAChRs are excitatory neurotrasnmitter receptors formed by a collection of nAChR subunits known to mediate synaptic transmission in the nervous system and the neuromuscular junction. Each nAchR subunit confers differential attributes to channel properties, including activation, deactivation and desensitization kinetics, pH sensitivity, cation permeability, and binding to allosteric modulators. CHRNB2 forms heteropentameric neuronal acetylcholine receptors with CHRNA2, CHRNA3, CHRNA4 and CHRNA6, as well as CHRNA5 and CHRNB3 as accesory subunits. The protein is Neuronal acetylcholine receptor subunit beta-2 (CHRNB2) of Gallus gallus (Chicken).